The following is a 63-amino-acid chain: Bowman-birk type proteinase inhibitor (63 aa).

7 cysteine pairs are disulfide-bonded: cysteine 7–cysteine 61, cysteine 8–cysteine 23, cysteine 11–cysteine 57, cysteine 13–cysteine 21, cysteine 31–cysteine 38, cysteine 35–cysteine 50, and cysteine 40–cysteine 48.

Its function is as follows. Inhibits trypsin, chymotrypsin, plasmin and factor XIIa. Does not inhibit factor Xa, thrombin and plasma kallikrein. The protein is Bowman-birk type proteinase inhibitor of Amburana acreana (Cerejeira).